The following is a 386-amino-acid chain: DNA-directed RNA polymerase subunit Rpo1C (386 aa).

The protein belongs to the RNA polymerase beta' chain family. In terms of assembly, part of the RNA polymerase complex.

The protein localises to the cytoplasm. It carries out the reaction RNA(n) + a ribonucleoside 5'-triphosphate = RNA(n+1) + diphosphate. In terms of biological role, DNA-dependent RNA polymerase (RNAP) catalyzes the transcription of DNA into RNA using the four ribonucleoside triphosphates as substrates. Forms part of the jaw domain. The sequence is that of DNA-directed RNA polymerase subunit Rpo1C from Methanococcus maripaludis (strain C5 / ATCC BAA-1333).